A 156-amino-acid polypeptide reads, in one-letter code: 6,7-dimethyl-8-ribityllumazine synthase (156 aa).

Residues Phe23, 57-59 (AFE), and 81-83 (TVI) contribute to the 5-amino-6-(D-ribitylamino)uracil site. Residue 86-87 (ST) participates in (2S)-2-hydroxy-3-oxobutyl phosphate binding. His89 (proton donor) is an active-site residue. Phe114 is a binding site for 5-amino-6-(D-ribitylamino)uracil. A (2S)-2-hydroxy-3-oxobutyl phosphate-binding site is contributed by Arg128.

This sequence belongs to the DMRL synthase family. In terms of assembly, forms an icosahedral capsid composed of 60 subunits, arranged as a dodecamer of pentamers.

It catalyses the reaction (2S)-2-hydroxy-3-oxobutyl phosphate + 5-amino-6-(D-ribitylamino)uracil = 6,7-dimethyl-8-(1-D-ribityl)lumazine + phosphate + 2 H2O + H(+). The protein operates within cofactor biosynthesis; riboflavin biosynthesis; riboflavin from 2-hydroxy-3-oxobutyl phosphate and 5-amino-6-(D-ribitylamino)uracil: step 1/2. Catalyzes the formation of 6,7-dimethyl-8-ribityllumazine by condensation of 5-amino-6-(D-ribitylamino)uracil with 3,4-dihydroxy-2-butanone 4-phosphate. This is the penultimate step in the biosynthesis of riboflavin. The chain is 6,7-dimethyl-8-ribityllumazine synthase from Shouchella clausii (strain KSM-K16) (Alkalihalobacillus clausii).